Consider the following 482-residue polypeptide: Dual specificity protein phosphatase 10 (482 aa).

One can recognise a Rhodanese domain in the interval 168 to 285 (PSQGPVIIDC…FKQNHENLCD (118 aa)). The interaction with MAP kinases stretch occupies residues 199–215 (KISRRRLQQGKITVLDL). The Tyrosine-protein phosphatase domain maps to 321 to 464 (ELTPILPFLF…LLEFEEDLNN (144 aa)). The active-site Phosphocysteine intermediate is the Cys-408.

Belongs to the protein-tyrosine phosphatase family. Non-receptor class dual specificity subfamily. As to quaternary structure, monomer. Interacts with MAPK14.

The protein resides in the cytoplasm. It localises to the nucleus. It catalyses the reaction O-phospho-L-tyrosyl-[protein] + H2O = L-tyrosyl-[protein] + phosphate. It carries out the reaction O-phospho-L-seryl-[protein] + H2O = L-seryl-[protein] + phosphate. The catalysed reaction is O-phospho-L-threonyl-[protein] + H2O = L-threonyl-[protein] + phosphate. Functionally, protein phosphatase involved in the inactivation of MAP kinases. Has a specificity for the MAPK11/MAPK12/MAPK13/MAPK14 subfamily. It preferably dephosphorylates p38. This Bos taurus (Bovine) protein is Dual specificity protein phosphatase 10 (DUSP10).